Consider the following 426-residue polypeptide: Protein EARLY STARVATION 1, chloroplastic (426 aa).

A chloroplast-targeting transit peptide spans 1–58 (MSEMAASSAISLLDIKLRRFGVGASNHELRLTKWFKGDQAGAPTRRFTCFADMLAPIR). 2 disordered regions span residues 106–127 (CTPRLTGPQSRDTPPKRDTGIA) and 396–426 (QPRERPPGVYPNLEFGPSPPPEPDLPPDQPQ). Positions 118 to 127 (TPPKRDTGIA) are enriched in basic and acidic residues. Residues 412–426 (PSPPPEPDLPPDQPQ) show a composition bias toward pro residues.

This sequence belongs to the ESV1 family.

It localises to the plastid. The protein resides in the chloroplast stroma. The protein localises to the plastid stroma. Its function is as follows. Binds preferentially to highly ordered alpha-glucans, such as starch and crystalline maltodextrins. Involved in the organization of the starch granule matrix, thus influencing starch turnover by modulating the accessibility of starch polymers to modifying and degrading enzymes involved in phosphorylation, hydrolyzes and synthesis, including starch synthases (SSI and SSIII), starch phosphorylases (PHS1), isoamylase, beta-amylase, glucan water dikinase (GWD) and phosphoglucan water dikinase (PWD). Prevents GWD- and PWD-mediated starch phosphorylation, and subsequent degradation. Required for the control of starch degradation in leaves and starch distribution in nonphotosynthetic parts (e.g. cells immediately adjacent to veins, columella cells of root caps, stems, flowers and siliques) by limiting the hasty depletion of starch reserves during the night. Promotes gravitropic responses, negative in shoots but positive in roots, by maintaining starch granules (statoliths) accumulation in hypocotyls and roots columella, especially in dark conditions and in the endodermis, where starch is formed from transported glucose-6-phosphates. The protein is Protein EARLY STARVATION 1, chloroplastic of Arabidopsis thaliana (Mouse-ear cress).